The following is a 700-amino-acid chain: Methionine--tRNA ligase (700 aa).

Residues Pro13 to His23 carry the 'HIGH' region motif. Cys144, Cys147, Cys157, and Cys160 together coordinate Zn(2+). The 'KMSKS' region signature appears at Lys341–Ser345. Residue Lys344 participates in ATP binding. Residues Asp598 to Ala700 enclose the tRNA-binding domain.

It belongs to the class-I aminoacyl-tRNA synthetase family. MetG type 1 subfamily. As to quaternary structure, homodimer. Zn(2+) is required as a cofactor.

The protein resides in the cytoplasm. It catalyses the reaction tRNA(Met) + L-methionine + ATP = L-methionyl-tRNA(Met) + AMP + diphosphate. In terms of biological role, is required not only for elongation of protein synthesis but also for the initiation of all mRNA translation through initiator tRNA(fMet) aminoacylation. The sequence is that of Methionine--tRNA ligase from Psychrobacter arcticus (strain DSM 17307 / VKM B-2377 / 273-4).